A 171-amino-acid chain; its full sequence is Shikimate kinase (171 aa).

ATP is bound at residue 14 to 19 (GAGKST). A Mg(2+)-binding site is contributed by S18. Substrate-binding residues include D36, R60, and G82. Residue R120 participates in ATP binding. R139 contributes to the substrate binding site. Position 156 (Q156) interacts with ATP.

The protein belongs to the shikimate kinase family. As to quaternary structure, monomer. Mg(2+) serves as cofactor.

Its subcellular location is the cytoplasm. The catalysed reaction is shikimate + ATP = 3-phosphoshikimate + ADP + H(+). The protein operates within metabolic intermediate biosynthesis; chorismate biosynthesis; chorismate from D-erythrose 4-phosphate and phosphoenolpyruvate: step 5/7. Functionally, catalyzes the specific phosphorylation of the 3-hydroxyl group of shikimic acid using ATP as a cosubstrate. The polypeptide is Shikimate kinase (Alteromonas mediterranea (strain DSM 17117 / CIP 110805 / LMG 28347 / Deep ecotype)).